We begin with the raw amino-acid sequence, 24 residues long: Conotoxin PIVF (24 aa).

3 cysteine pairs are disulfide-bonded: Cys-2/Cys-10, Cys-3/Cys-15, and Cys-13/Cys-19. Lys-24 bears the Lysine amide mark.

It belongs to the conotoxin A superfamily. In terms of tissue distribution, expressed by the venom duct.

It is found in the secreted. Probable neurotoxin with ion channel inhibitor activity. In vivo, elicits dose-dependently excitatory activity upon injection into fish. Its action is slowly reversible. The chain is Conotoxin PIVF from Conus purpurascens (Purple cone).